Reading from the N-terminus, the 510-residue chain is Probable lipid II flippase MurJ (510 aa).

12 consecutive transmembrane segments (helical) span residues D13 to N33, G81 to F101, F130 to G150, V154 to A174, L182 to F202, I240 to L260, L266 to L286, I315 to L335, A357 to A377, M396 to M416, V443 to V463, and L481 to V501.

The protein belongs to the MurJ/MviN family.

Its subcellular location is the cell inner membrane. Its pathway is cell wall biogenesis; peptidoglycan biosynthesis. Its function is as follows. Involved in peptidoglycan biosynthesis. Transports lipid-linked peptidoglycan precursors from the inner to the outer leaflet of the cytoplasmic membrane. This Haemophilus influenzae (strain ATCC 51907 / DSM 11121 / KW20 / Rd) protein is Probable lipid II flippase MurJ.